Consider the following 430-residue polypeptide: Adenylosuccinate synthetase (430 aa).

Residues 13–19 (GDEGKGK) and 41–43 (GHT) each bind GTP. D14 serves as the catalytic Proton acceptor. Residues D14 and G41 each coordinate Mg(2+). Residues 14-17 (DEGK), 39-42 (NAGH), T130, R144, Q225, T240, and R304 contribute to the IMP site. The active-site Proton donor is H42. 300–306 (ATTGRAR) contributes to the substrate binding site. GTP contacts are provided by residues R306, 332 to 334 (KLD), and 414 to 416 (STG).

The protein belongs to the adenylosuccinate synthetase family. In terms of assembly, homodimer. Mg(2+) serves as cofactor.

Its subcellular location is the cytoplasm. It catalyses the reaction IMP + L-aspartate + GTP = N(6)-(1,2-dicarboxyethyl)-AMP + GDP + phosphate + 2 H(+). It functions in the pathway purine metabolism; AMP biosynthesis via de novo pathway; AMP from IMP: step 1/2. In terms of biological role, plays an important role in the de novo pathway of purine nucleotide biosynthesis. Catalyzes the first committed step in the biosynthesis of AMP from IMP. The sequence is that of Adenylosuccinate synthetase from Pseudomonas syringae pv. tomato (strain ATCC BAA-871 / DC3000).